The chain runs to 187 residues: UPF0301 protein VC_0467 (187 aa).

This sequence belongs to the UPF0301 (AlgH) family.

In Vibrio cholerae serotype O1 (strain ATCC 39315 / El Tor Inaba N16961), this protein is UPF0301 protein VC_0467.